The following is a 148-amino-acid chain: Protein RESISTANCE TO POWDERY MILDEW 8.1 (148 aa).

Residues 1 to 148 (MPIGELAIGA…VISACSKIRA (148 aa)) form the RPW8 domain. A helical transmembrane segment spans residues 7-23 (AIGAVLGVGAQAIYDRF). Positions 120-140 (DDIKEIKAKISEMDTKLAEVI) form a coiled coil.

The protein belongs to the plant RPW8 protein family.

The protein localises to the membrane. Disease resistance (R) protein that induces localized, salicylic acid-dependent defenses. Confers resistance to powdery mildew (e.g. Erysiphe cichoracearum UCSC1). This is Protein RESISTANCE TO POWDERY MILDEW 8.1 from Arabidopsis thaliana (Mouse-ear cress).